Reading from the N-terminus, the 225-residue chain is ATP-dependent Clp protease proteolytic subunit (225 aa).

Serine 123 functions as the Nucleophile in the catalytic mechanism. Histidine 148 is a catalytic residue.

It belongs to the peptidase S14 family. As to quaternary structure, fourteen ClpP subunits assemble into 2 heptameric rings which stack back to back to give a disk-like structure with a central cavity, resembling the structure of eukaryotic proteasomes.

It localises to the cytoplasm. It carries out the reaction Hydrolysis of proteins to small peptides in the presence of ATP and magnesium. alpha-casein is the usual test substrate. In the absence of ATP, only oligopeptides shorter than five residues are hydrolyzed (such as succinyl-Leu-Tyr-|-NHMec, and Leu-Tyr-Leu-|-Tyr-Trp, in which cleavage of the -Tyr-|-Leu- and -Tyr-|-Trp bonds also occurs).. Its function is as follows. Cleaves peptides in various proteins in a process that requires ATP hydrolysis. Has a chymotrypsin-like activity. Plays a major role in the degradation of misfolded proteins. This chain is ATP-dependent Clp protease proteolytic subunit, found in Chlorobium luteolum (strain DSM 273 / BCRC 81028 / 2530) (Pelodictyon luteolum).